The primary structure comprises 436 residues: 3-ketoacyl-CoA thiolase (436 aa).

Cys99 (acyl-thioester intermediate) is an active-site residue. Catalysis depends on proton acceptor residues His392 and Cys422.

The protein belongs to the thiolase-like superfamily. Thiolase family. As to quaternary structure, heterotetramer of two alpha chains (FadJ) and two beta chains (FadI).

Its subcellular location is the cytoplasm. The catalysed reaction is an acyl-CoA + acetyl-CoA = a 3-oxoacyl-CoA + CoA. It participates in lipid metabolism; fatty acid beta-oxidation. Catalyzes the final step of fatty acid oxidation in which acetyl-CoA is released and the CoA ester of a fatty acid two carbons shorter is formed. This Shewanella piezotolerans (strain WP3 / JCM 13877) protein is 3-ketoacyl-CoA thiolase.